Here is a 413-residue protein sequence, read N- to C-terminus: Multidrug resistance protein MdtA (413 aa).

The signal sequence occupies residues 1 to 20 (MKGSNTFRWAIAIGVVVAAA). Disordered stretches follow at residues 31-57 (SPTAAPGVAAQAPHTAAAGRRGMRDGP) and 392-413 (PQTTMADEKSPSRHEGQKGARA). A compositionally biased stretch (basic and acidic residues) spans 397–413 (ADEKSPSRHEGQKGARA).

It belongs to the membrane fusion protein (MFP) (TC 8.A.1) family. As to quaternary structure, part of a tripartite efflux system composed of MdtA, MdtB and MdtC.

The protein localises to the cell inner membrane. The chain is Multidrug resistance protein MdtA from Salmonella heidelberg (strain SL476).